Here is a 359-residue protein sequence, read N- to C-terminus: Peptide chain release factor 1 (359 aa).

Glutamine 235 carries the N5-methylglutamine modification.

This sequence belongs to the prokaryotic/mitochondrial release factor family. Post-translationally, methylated by PrmC. Methylation increases the termination efficiency of RF1.

Its subcellular location is the cytoplasm. Functionally, peptide chain release factor 1 directs the termination of translation in response to the peptide chain termination codons UAG and UAA. The chain is Peptide chain release factor 1 from Nitrosomonas eutropha (strain DSM 101675 / C91 / Nm57).